The primary structure comprises 377 residues: Nitric oxide reductase FlRd-NAD(+) reductase (377 aa).

It belongs to the FAD-dependent oxidoreductase family. It depends on FAD as a cofactor.

It localises to the cytoplasm. The catalysed reaction is 2 reduced [nitric oxide reductase rubredoxin domain] + NAD(+) + H(+) = 2 oxidized [nitric oxide reductase rubredoxin domain] + NADH. It participates in nitrogen metabolism; nitric oxide reduction. One of at least two accessory proteins for anaerobic nitric oxide (NO) reductase. Reduces the rubredoxin moiety of NO reductase. The sequence is that of Nitric oxide reductase FlRd-NAD(+) reductase from Salmonella paratyphi C (strain RKS4594).